A 148-amino-acid chain; its full sequence is Cystatin-C (148 aa).

A signal peptide spans 1–28 (MARSLGVPLLLLAALVVALALAVSPAAG). The Secondary area of contact signature appears at 83-87 (QIVSG). 2 cysteine pairs are disulfide-bonded: cysteine 101/cysteine 111 and cysteine 125/cysteine 145.

This sequence belongs to the cystatin family.

The protein localises to the secreted. This is a thiol proteinase inhibitor. In Oryctolagus cuniculus (Rabbit), this protein is Cystatin-C (CST3).